The primary structure comprises 296 residues: Cholesterol ring-cleaving hydrolase IpdA subunit (296 aa).

Belongs to the 3-oxoacid CoA-transferase subunit A family. Heterotetramer composed of 2 IpdA subunits and 2 IpdB subunits.

It carries out the reaction (3E)-2-(2-carboxylatoethyl)-3-methyl-6-oxocyclohex-1-ene-1-carboxyl-CoA + H2O = 6-methyl-3,7-dioxodecanedioyl-CoA. The protein operates within steroid metabolism; cholesterol degradation. Functionally, involved in the final steps of cholesterol and steroid degradation. Opens the last steroid ring of cholesterol by catalyzing the hydrolysis of (3E)-2-(2-carboxylatoethyl)-3-methyl-6-oxocyclohex-1-ene-1-carboxyl-CoA (COCHEA-CoA) to 6-methyl-3,7-dioxodecanedioyl-CoA (MeDODA-CoA). This chain is Cholesterol ring-cleaving hydrolase IpdA subunit, found in Rhodococcus jostii (strain RHA1).